A 443-amino-acid chain; its full sequence is Exodeoxyribonuclease 7 large subunit (443 aa).

This sequence belongs to the XseA family. In terms of assembly, heterooligomer composed of large and small subunits.

It is found in the cytoplasm. The enzyme catalyses Exonucleolytic cleavage in either 5'- to 3'- or 3'- to 5'-direction to yield nucleoside 5'-phosphates.. Its function is as follows. Bidirectionally degrades single-stranded DNA into large acid-insoluble oligonucleotides, which are then degraded further into small acid-soluble oligonucleotides. The protein is Exodeoxyribonuclease 7 large subunit of Legionella pneumophila (strain Lens).